The sequence spans 179 residues: MGILFTRIWRLFNHQEHKVIIVGLDNAGKTTILYQFSMNEVVHTSPTIGSNVEEIVVNNTRFLMWDIGGQESLRPSWNTYYTNTEFVIVVVDSTDRERISVTREELYKMLAHEDLRKAGLLIFANKQDVKECMTVAEISQFLKLTSIKDHQWHIQACCALTGEGLCQGLEWMMSRLKIR.

G2 is lipidated: N-myristoyl glycine. Residues 23–30 (GLDNAGKT), 66–70 (DIGGQ), 125–128 (NKQD), and A159 each bind GTP.

Belongs to the small GTPase superfamily. Arf family.

Functionally, lacks ADP-ribosylation enhancing activity. The protein is ADP-ribosylation factor-like protein 5A (Arl5a) of Mus musculus (Mouse).